The following is a 278-amino-acid chain: Large ribosomal subunit protein uL2 (278 aa).

The segment at 214–278 is disordered; it reads WLGKRPHNRG…IMRSRHQRKS (65 aa).

The protein belongs to the universal ribosomal protein uL2 family. Part of the 50S ribosomal subunit. Forms a bridge to the 30S subunit in the 70S ribosome.

Its function is as follows. One of the primary rRNA binding proteins. Required for association of the 30S and 50S subunits to form the 70S ribosome, for tRNA binding and peptide bond formation. It has been suggested to have peptidyltransferase activity; this is somewhat controversial. Makes several contacts with the 16S rRNA in the 70S ribosome. This is Large ribosomal subunit protein uL2 from Chelativorans sp. (strain BNC1).